The sequence spans 665 residues: Golgi-associated RAB2B interactor protein 3 (665 aa).

Disordered stretches follow at residues 211–240 (EIRGEGDQNSRPQSSPTVSEATSAAFAGGE), 272–296 (AAAGTAGPAAGPAAGTAGPAAGTAG), and 480–590 (SEGY…GSVS). The segment covering 219-232 (NSRPQSSPTVSEAT) has biased composition (polar residues). Residues 499–513 (EAKEKRERREKDRTS) are compositionally biased toward basic and acidic residues. Composition is skewed to basic residues over residues 514–538 (SRKSSHHRRTGMSRHSSKDKSRKTS) and 554–566 (GHGRLRGKRHSSS). The Bipartite nuclear localization signal motif lies at 515-531 (RKSSHHRRTGMSRHSSK). Position 652 is a phosphoserine (S652).

Belongs to the GARIN family. As to quaternary structure, interacts (via N-terminus) with RAB2B (in GTP-bound form). Interacts with FRG1. In terms of tissue distribution, expressed in adult spermatocytes and spermatids.

Its subcellular location is the golgi apparatus. The protein resides in the nucleus. It localises to the cajal body. In terms of biological role, may be involved in RNA biogenesis. The protein is Golgi-associated RAB2B interactor protein 3 of Mus musculus (Mouse).